The chain runs to 264 residues: Major prion protein (264 aa).

An N-terminal signal peptide occupies residues 1–24 (MVKSHIGSWILVLFVAMWSDVGLC). Residues 25-41 (KKRPKPGGGWNTGGSRY) are interaction with ADGRG6. An interaction with GRB2, ERI3 and SYN1 region spans residues 25-241 (KKRPKPGGGW…ESQAYYQRGA (217 aa)). A disordered region spans residues 28 to 119 (PKPGGGWNTG…WNKPSKPKTN (92 aa)). A run of 6 repeats spans residues 54–62 (PQGGGGWGQ), 63–70 (PHGGGWGQ), 71–78 (PHGGGWGQ), 79–86 (PHGGGWGQ), 87–94 (PHGGGWGQ), and 95–103 (PHGGGGWGQ). Residues 54–103 (PQGGGGWGQPHGGGWGQPHGGGWGQPHGGGWGQPHGGGWGQPHGGGGWGQ) form a 6 X 8 AA tandem repeats of P-H-G-G-G-W-G-Q region. Residues 55–107 (QGGGGWGQPHGGGWGQPHGGGWGQPHGGGWGQPHGGGWGQPHGGGGWGQGGTH) show a composition bias toward gly residues. The Cu(2+) site is built by His72, Gly73, Gly74, His80, Gly81, Gly82, His88, Gly89, Gly90, His96, Gly98, and Gly99. An intrachain disulfide couples Cys190 to Cys225. 2 N-linked (GlcNAc...) asparagine glycosylation sites follow: Asn192 and Asn208. A lipid anchor (GPI-anchor amidated alanine) is attached at Ala241. Residues 242 to 264 (SVILFSSPPVILLISFLIFLIVG) constitute a propeptide, removed in mature form.

This sequence belongs to the prion family. As to quaternary structure, monomer and homodimer. Has a tendency to aggregate into amyloid fibrils containing a cross-beta spine, formed by a steric zipper of superposed beta-strands. Soluble oligomers may represent an intermediate stage on the path to fibril formation. Copper binding may promote oligomerization. Interacts with GRB2, APP, ERI3/PRNPIP and SYN1. Mislocalized cytosolically exposed PrP interacts with MGRN1; this interaction alters MGRN1 subcellular location and causes lysosomal enlargement. Interacts with APP. Interacts with KIAA1191. Interacts with ADGRG6.

The protein resides in the cell membrane. It localises to the golgi apparatus. Functionally, its primary physiological function is unclear. May play a role in neuronal development and synaptic plasticity. May be required for neuronal myelin sheath maintenance. May promote myelin homeostasis through acting as an agonist for ADGRG6 receptor. May play a role in iron uptake and iron homeostasis. Soluble oligomers are toxic to cultured neuroblastoma cells and induce apoptosis (in vitro). Association with GPC1 (via its heparan sulfate chains) targets PRNP to lipid rafts. Also provides Cu(2+) or Zn(2+) for the ascorbate-mediated GPC1 deaminase degradation of its heparan sulfate side chains. This chain is Major prion protein (PRNP), found in Bos indicus x Bos taurus (Hybrid cattle).